The chain runs to 165 residues: Nucleotide-binding protein Ccur92_01650 (165 aa).

Belongs to the YajQ family.

In terms of biological role, nucleotide-binding protein. The protein is Nucleotide-binding protein Ccur92_01650 of Campylobacter curvus (strain 525.92).